The following is a 165-amino-acid chain: Protein SprT (165 aa).

Residues 22 to 163 (LAQANLKLGR…RCVHCGEQLT (142 aa)) form the SprT-like domain. A Zn(2+)-binding site is contributed by His-78. Glu-79 is an active-site residue. Residue His-82 coordinates Zn(2+).

This sequence belongs to the SprT family. Requires Zn(2+) as cofactor.

The protein resides in the cytoplasm. The protein is Protein SprT of Escherichia fergusonii (strain ATCC 35469 / DSM 13698 / CCUG 18766 / IAM 14443 / JCM 21226 / LMG 7866 / NBRC 102419 / NCTC 12128 / CDC 0568-73).